Here is a 355-residue protein sequence, read N- to C-terminus: Protein ATP1B4 (355 aa).

Topologically, residues 1–108 are nuclear; it reads MRRQLRSRRA…SLARTGQSLS (108 aa). The interval 35-76 is disordered; that stretch reads EEEEAEEARVMVVPDLEEEEKEEEEEKEEDEKEEEESHHQDT. Acidic residues predominate over residues 49–68; it reads DLEEEEKEEEEEKEEDEKEE. The chain crosses the membrane as a helical; Signal-anchor for type II membrane protein span at residues 109–129; the sequence is LLLVIYFFFYASLAAVITLCM. The Perinuclear space segment spans residues 130-355; that stretch reads YTLFLTISPY…RVIFTLNIET (226 aa).

It belongs to the X(+)/potassium ATPases subunit beta family. In terms of assembly, associates with a SMAD7-transcriptional complex. Interacts with SNW1 and TOR1AIP1. Does not associate with known Na,K-ATPase alpha-subunits. In terms of tissue distribution, expressed in skeletal muscle (at protein level). Expressed during postnatal development in skeletal muscle and heart.

The protein localises to the nucleus inner membrane. In terms of biological role, may act as a transcriptional coregulator during muscle development through its interaction with SNW1. Has lost its ancestral function as a Na,K-ATPase beta-subunit. The chain is Protein ATP1B4 (ATP1B4) from Sus scrofa (Pig).